The sequence spans 307 residues: Elongation factor Ts (307 aa).

The interval 80-83 (TDFV) is involved in Mg(2+) ion dislocation from EF-Tu.

It belongs to the EF-Ts family.

It localises to the cytoplasm. Functionally, associates with the EF-Tu.GDP complex and induces the exchange of GDP to GTP. It remains bound to the aminoacyl-tRNA.EF-Tu.GTP complex up to the GTP hydrolysis stage on the ribosome. The sequence is that of Elongation factor Ts from Xanthobacter autotrophicus (strain ATCC BAA-1158 / Py2).